The primary structure comprises 373 residues: tRNA 2-selenouridine synthase (373 aa).

In terms of domain architecture, Rhodanese spans 12 to 136 (FINDRPMMDA…MRGFLLETTE (125 aa)). The active-site S-selanylcysteine intermediate is the Cys95.

The protein belongs to the SelU family. In terms of assembly, monomer.

The catalysed reaction is 5-methylaminomethyl-2-thiouridine(34) in tRNA + selenophosphate + (2E)-geranyl diphosphate + H2O + H(+) = 5-methylaminomethyl-2-selenouridine(34) in tRNA + (2E)-thiogeraniol + phosphate + diphosphate. The enzyme catalyses 5-methylaminomethyl-2-thiouridine(34) in tRNA + (2E)-geranyl diphosphate = 5-methylaminomethyl-S-(2E)-geranyl-thiouridine(34) in tRNA + diphosphate. It catalyses the reaction 5-methylaminomethyl-S-(2E)-geranyl-thiouridine(34) in tRNA + selenophosphate + H(+) = 5-methylaminomethyl-2-(Se-phospho)selenouridine(34) in tRNA + (2E)-thiogeraniol. It carries out the reaction 5-methylaminomethyl-2-(Se-phospho)selenouridine(34) in tRNA + H2O = 5-methylaminomethyl-2-selenouridine(34) in tRNA + phosphate. Functionally, involved in the post-transcriptional modification of the uridine at the wobble position (U34) of tRNA(Lys), tRNA(Glu) and tRNA(Gln). Catalyzes the conversion of 2-thiouridine (S2U-RNA) to 2-selenouridine (Se2U-RNA). Acts in a two-step process involving geranylation of 2-thiouridine (S2U) to S-geranyl-2-thiouridine (geS2U) and subsequent selenation of the latter derivative to 2-selenouridine (Se2U) in the tRNA chain. This chain is tRNA 2-selenouridine synthase, found in Ectopseudomonas mendocina (strain ymp) (Pseudomonas mendocina).